A 73-amino-acid polypeptide reads, in one-letter code: Conotoxin Bt11.1 (73 aa).

The first 20 residues, 1-20 (MKLCVAFLLVLVILPSVIGG), serve as a signal peptide directing secretion. Positions 21–35 (KPSERTLSGATRRGD) are excised as a propeptide. Disulfide bonds link C39/C53, C46/C58, C52/C63, and C57/C70.

This sequence belongs to the conotoxin I1 superfamily. In terms of tissue distribution, expressed by the venom duct.

Its subcellular location is the secreted. This is Conotoxin Bt11.1 from Conus betulinus (Beech cone).